The primary structure comprises 309 residues: Dioxygenase af480 (309 aa).

Positions 153, 155, and 228 each coordinate Fe cation.

Belongs to the PhyH family. It depends on Fe cation as a cofactor.

The enzyme catalyses 5-dehydro-6-demethoxyfumagillol + 2-oxoglutarate + O2 = 5-dehydro-6-demethoxy-6-hydroxyfumagillol + succinate + CO2. Its pathway is secondary metabolite biosynthesis; terpenoid biosynthesis. Functionally, dioxygenase; part of the gene cluster that mediates the biosynthesis of fumagillin, a meroterpenoid that has numerous biological activities including irreversible inhibition of human type 2 methionine aminopeptidase (METAP2). Within the pathway, the dioxygenase af480 acts as a 5-dehydro-6-demethoxyfumagillol dioxygenase that hydroylates 5-keto-demethoxyfumagillol at position C-6. The pathway begins with the conversion of farnesyl pyrophosphate (FPP) to beta-trans-bergamotene by the membrane-bound beta-trans-bergamotene synthase af520. The multifunctional cytochrome P450 monooxygenase af510 then converts beta-trans-bergamotene into 5-keto-demethoxyfumagillol via several oxydation steps. 5-keto-demethoxyfumagillol is then subjected to successive C-6 hydroxylation and O-methylation by the dioxygenase af480 and O-methyltransferase af390-400, respectively, to yield 5-keto-fumagillol, which is then stereoselectively reduced by the keto-reductase af490 to 5R-hydroxy-seco-sesquiterpene. The next step is the polyketide transferase af380-catalyzed transfer of a dodecapentaenoyl group synthesized by the polyketide synthase af370 onto 5R-hydroxy-seco-sesquiterpene which leads to the production of prefumagillin. Finally, oxidative cleavage by the monooxygenase af470 converts prefumagillin to fumagillin. This chain is Dioxygenase af480, found in Aspergillus fumigatus (strain ATCC MYA-4609 / CBS 101355 / FGSC A1100 / Af293) (Neosartorya fumigata).